The chain runs to 373 residues: Capsular polysaccharide phosphotransferase (373 aa).

It belongs to the stealth family.

Its function is as follows. Part of a capsule gene locus. Expression was not detected under standard growth conditions. The chain is Capsular polysaccharide phosphotransferase from Neisseria meningitidis serogroup B.